A 66-amino-acid polypeptide reads, in one-letter code: Toxin NaTx-4 (66 aa).

Residues 1–64 form the LCN-type CS-alpha/beta domain; it reads KEGYLVNKET…TFPIPGKTCS (64 aa). 4 disulfides stabilise this stretch: C12-C63, C16-C39, C25-C44, and C29-C46.

Belongs to the long (4 C-C) scorpion toxin superfamily. Sodium channel inhibitor family. Expressed by the venom gland.

Its subcellular location is the secreted. Its function is as follows. Probable sodium channel inhibitor. The sequence is that of Toxin NaTx-4 from Centruroides sculpturatus (Arizona bark scorpion).